Here is a 208-residue protein sequence, read N- to C-terminus: Apoptosis inhibitor 193R (208 aa).

The segment at 1-25 (MDTCGIYNSDNEEFSQENDGENDGG) is disordered. Positions 10–23 (DNEEFSQENDGEND) are enriched in acidic residues. The stretch at 37–108 (YDERLNSFQN…QDLKINCLFV (72 aa)) is one BIR repeat. Zn(2+)-binding residues include Cys74, Cys77, His94, and Cys105. 3 tandem repeats follow at residues 134-139 (NQDLDH), 140-145 (NQDLDH), and 146-151 (NQDLDQ). The interval 134–151 (NQDLDHNQDLDHNQDLDQ) is 3 X 6 AA tandem repeats. The RING-type zinc finger occupies 163 to 197 (CKICFTNKITKVLIPCGHSSCYECVFKLQTCPICK).

The protein belongs to the IIV-6 193R family.

Its function is as follows. Plays a role early in infection by preventing host cell apoptosis. This chain is Apoptosis inhibitor 193R, found in Invertebrate iridescent virus 6 (IIV-6).